The following is a 198-amino-acid chain: Protein GrpE (198 aa).

It belongs to the GrpE family. Homodimer.

The protein localises to the cytoplasm. In terms of biological role, participates actively in the response to hyperosmotic and heat shock by preventing the aggregation of stress-denatured proteins, in association with DnaK and GrpE. It is the nucleotide exchange factor for DnaK and may function as a thermosensor. Unfolded proteins bind initially to DnaJ; upon interaction with the DnaJ-bound protein, DnaK hydrolyzes its bound ATP, resulting in the formation of a stable complex. GrpE releases ADP from DnaK; ATP binding to DnaK triggers the release of the substrate protein, thus completing the reaction cycle. Several rounds of ATP-dependent interactions between DnaJ, DnaK and GrpE are required for fully efficient folding. This Vibrio harveyi (Beneckea harveyi) protein is Protein GrpE.